The chain runs to 503 residues: Probable cytosol aminopeptidase (503 aa).

Residues Lys274 and Asp279 each contribute to the Mn(2+) site. Lys286 is a catalytic residue. Residues Asp297, Asp356, and Glu358 each contribute to the Mn(2+) site. The active site involves Arg360.

The protein belongs to the peptidase M17 family. It depends on Mn(2+) as a cofactor.

Its subcellular location is the cytoplasm. It carries out the reaction Release of an N-terminal amino acid, Xaa-|-Yaa-, in which Xaa is preferably Leu, but may be other amino acids including Pro although not Arg or Lys, and Yaa may be Pro. Amino acid amides and methyl esters are also readily hydrolyzed, but rates on arylamides are exceedingly low.. It catalyses the reaction Release of an N-terminal amino acid, preferentially leucine, but not glutamic or aspartic acids.. Functionally, presumably involved in the processing and regular turnover of intracellular proteins. Catalyzes the removal of unsubstituted N-terminal amino acids from various peptides. The sequence is that of Probable cytosol aminopeptidase from Burkholderia thailandensis (strain ATCC 700388 / DSM 13276 / CCUG 48851 / CIP 106301 / E264).